The chain runs to 294 residues: Nucleotide-binding protein lp_0779 (294 aa).

12 to 19 contributes to the ATP binding site; sequence GMSGAGKT. 62–65 provides a ligand contact to GTP; that stretch reads DLRS.

Belongs to the RapZ-like family.

Displays ATPase and GTPase activities. The protein is Nucleotide-binding protein lp_0779 of Lactiplantibacillus plantarum (strain ATCC BAA-793 / NCIMB 8826 / WCFS1) (Lactobacillus plantarum).